Reading from the N-terminus, the 348-residue chain is Selenide, water dikinase (348 aa).

Cysteine 17 is a catalytic residue. Residues lysine 20 and 47 to 49 (RAD) each bind ATP. Aspartate 50 lines the Mg(2+) pocket. Residues aspartate 67, aspartate 90, and 138-140 (GHT) each bind ATP. Aspartate 90 lines the Mg(2+) pocket. Aspartate 226 contributes to the Mg(2+) binding site.

It belongs to the selenophosphate synthase 1 family. Class I subfamily. Homodimer. Mg(2+) serves as cofactor.

The catalysed reaction is hydrogenselenide + ATP + H2O = selenophosphate + AMP + phosphate + 2 H(+). Its function is as follows. Synthesizes selenophosphate from selenide and ATP. The chain is Selenide, water dikinase from Pelobacter propionicus (strain DSM 2379 / NBRC 103807 / OttBd1).